Here is a 691-residue protein sequence, read N- to C-terminus: TBC1 domain family member 15 (691 aa).

N-acetylalanine is present on alanine 2. Phosphoserine is present on residues serine 23, serine 70, serine 205, proline 213, and serine 274. One can recognise a Rab-GAP TBC domain in the interval 346-556; the sequence is GLSHALRKQA…RLWEVMWTEL (211 aa). Phosphoserine is present on residues serine 640 and serine 675. The residue at position 689 (threonine 689) is a Phosphothreonine.

As to quaternary structure, interacts with non-phosphorylated form of RAB8A; phosphorylation of RAB8A at 'Thr-72' disrupts this interaction. Interacts with ARMC12. Ubiquitous.

Its subcellular location is the cytoplasm. Functionally, acts as a GTPase activating protein for RAB7A. Does not act on RAB4, RAB5 or RAB6. This Homo sapiens (Human) protein is TBC1 domain family member 15 (TBC1D15).